Reading from the N-terminus, the 336-residue chain is Mitochondrial thiamine diphosphate carrier 2 (336 aa).

Transmembrane regions (helical) follow at residues 11–27, 88–105, 127–150, 182–199, 230–246, and 303–322; these read RRALVDSLAGAISGGIS, VPALLMYMPYTAIQFTVL, YLSYVSGALAGCAATIGSYPFDLL, LYSGLSPTLVEIIPYAGL, SVSSFQLFLCGFAAGTF, and GLFPSLVKSAPAGAVTFVAY. Solcar repeat units follow at residues 11–111, 124–210, and 231–328; these read RRAL…LKTF, LSPY…FKRS, and VSSF…ISDW.

This sequence belongs to the mitochondrial carrier (TC 2.A.29) family. Ubiquitous.

It localises to the mitochondrion inner membrane. Mitochondrial transporter that mediates uptake of thiamine diphosphate (ThDP) into mitochondria. The sequence is that of Mitochondrial thiamine diphosphate carrier 2 from Zea mays (Maize).